A 254-amino-acid polypeptide reads, in one-letter code: Mantle protein (254 aa).

The signal sequence occupies residues 1–16 (MLAVLLFAALVATAYS).

Prismatic layer of shell (at protein level). Expressed primarily in the mantle with highest level in the outer epithelium of the mantle edge and lower level in the mantle pallium.

It is found in the secreted. This is Mantle protein from Margaritifera margaritifera (Freshwater pearl mussel).